The primary structure comprises 149 residues: Deoxyuridine 5'-triphosphate nucleotidohydrolase (149 aa).

Substrate contacts are provided by residues 68-70, Asn81, and 85-87; these read RSG and LID.

It belongs to the dUTPase family. Mg(2+) serves as cofactor.

It carries out the reaction dUTP + H2O = dUMP + diphosphate + H(+). It functions in the pathway pyrimidine metabolism; dUMP biosynthesis; dUMP from dCTP (dUTP route): step 2/2. Functionally, this enzyme is involved in nucleotide metabolism: it produces dUMP, the immediate precursor of thymidine nucleotides and it decreases the intracellular concentration of dUTP so that uracil cannot be incorporated into DNA. The polypeptide is Deoxyuridine 5'-triphosphate nucleotidohydrolase (Azoarcus sp. (strain BH72)).